The primary structure comprises 86 residues: Kappa-theraphotoxin-Cg1a 6 (86 aa).

The first 21 residues, 1-21, serve as a signal peptide directing secretion; that stretch reads MKVSVLITLAVLGVMFVWASA. A propeptide spanning residues 22 to 50 is cleaved from the precursor; the sequence is AELEERGSDQRDSPAWLKSMERIFQSEER. 3 disulfide bridges follow: Cys52–Cys66, Cys59–Cys71, and Cys65–Cys78. Position 84 is a phenylalanine amide (Phe84).

It belongs to the neurotoxin 10 (Hwtx-1) family. 28 (Jztx-11) subfamily. As to expression, expressed by the venom gland.

Its subcellular location is the secreted. In terms of biological role, this toxin acts as a voltage-dependent gating-modifier. It inhibits the sodium conductance (IC(50)=124 nM) and slows the fast inactivation (EC(50)=1180 nM) of Nav1.5/SCN5A. It significantly shifts the activation to more depolarized voltages and decreases the deactivation of Nav1.5 currents upon extreme depolarization, but only slightly affects voltage-dependence of steady-state inactivation. In addition, this toxin causes an approximately five-fold decrease in the rate of recovery from inactivation and an approximately 1.9-fold reduction in the closed-state inactivation rate. This toxin integrates the functions of site 3 toxins (alpha-scorpion toxins) with site 4 toxins (beta-scorpion and spider toxins) by targeting multiple sites on Nav1.5. Also shows inhibition of voltage-gated potassium channels (5 uM completely inhibits Kv2.1/KCNB1, whereas 5 uM moderately inhibits Kv4.2/KCND2 Kv4.1/KCND1 channels). The protein is Kappa-theraphotoxin-Cg1a 6 of Chilobrachys guangxiensis (Chinese earth tiger tarantula).